The chain runs to 782 residues: uncharacterized protein (782 aa).

Disordered regions lie at residues 1-25 (MFSP…STTS) and 175-195 (RPRT…EDLR). Residues 13–25 (ESESVSNCESTTS) show a composition bias toward low complexity. Over residues 183–195 (RAGDASMSREDLR) the composition is skewed to basic and acidic residues. Coiled-coil stretches lie at residues 223 to 331 (RENR…STLN), 348 to 398 (LSQF…VSTL), 428 to 601 (NRIN…QLLN), and 699 to 743 (TIET…IIAK). The disordered stretch occupies residues 748 to 782 (NIPKTEKSSPMKKVPPIENFRAKSQTSITGLSPVL). Residues 769–782 (AKSQTSITGLSPVL) are compositionally biased toward polar residues.

This is an uncharacterized protein from Caenorhabditis elegans.